A 397-amino-acid chain; its full sequence is Polygalacturonase (397 aa).

A signal peptide spans 1-22 (MGSYLGIYTILVLCLLGYSANA). 4 PbH1 repeats span residues 169–195 (GKNM…HLGR), 196–217 (CEGV…SVGD), 219–239 (MKNL…SVGS), and 249–270 (VTDI…RIKT). Asn-171 carries an N-linked (GlcNAc...) asparagine glycan. Asp-210 serves as the catalytic Proton donor. A disulfide bridge connects residues Cys-212 and Cys-229. The active site involves His-233. Residue Asn-256 is glycosylated (N-linked (GlcNAc...) asparagine). 2 disulfide bridges follow: Cys-341–Cys-347 and Cys-370–Cys-386.

This sequence belongs to the glycosyl hydrolase 28 family. As to expression, pollen.

Its subcellular location is the secreted. It is found in the cell wall. The enzyme catalyses (1,4-alpha-D-galacturonosyl)n+m + H2O = (1,4-alpha-D-galacturonosyl)n + (1,4-alpha-D-galacturonosyl)m.. Functionally, may function in depolymerizing pectin during pollen development, germination, and tube growth. In Brassica napus (Rape), this protein is Polygalacturonase.